A 185-amino-acid chain; its full sequence is Protein GrpE (185 aa).

Over residues 1 to 11 the composition is skewed to polar residues; that stretch reads MENTQENPTDQ. A disordered region spans residues 1 to 38; sequence MENTQENPTDQTTEETGREAQAAEPAAQAAENAAPAAE. Residues 19–38 show a composition bias toward low complexity; that stretch reads EAQAAEPAAQAAENAAPAAE.

This sequence belongs to the GrpE family. As to quaternary structure, homodimer.

The protein localises to the cytoplasm. In terms of biological role, participates actively in the response to hyperosmotic and heat shock by preventing the aggregation of stress-denatured proteins, in association with DnaK and GrpE. It is the nucleotide exchange factor for DnaK and may function as a thermosensor. Unfolded proteins bind initially to DnaJ; upon interaction with the DnaJ-bound protein, DnaK hydrolyzes its bound ATP, resulting in the formation of a stable complex. GrpE releases ADP from DnaK; ATP binding to DnaK triggers the release of the substrate protein, thus completing the reaction cycle. Several rounds of ATP-dependent interactions between DnaJ, DnaK and GrpE are required for fully efficient folding. The polypeptide is Protein GrpE (Burkholderia mallei (strain NCTC 10247)).